A 973-amino-acid polypeptide reads, in one-letter code: Short transient receptor potential channel 5 (973 aa).

The Cytoplasmic segment spans residues 1-325 (MAQLYYKKVN…YDGFPGWRRK (325 aa)). ANK repeat units follow at residues 30-60 (SAEEKAFLNAVEKGDYATVKQALQEAEIYYN), 69-97 (LGRSALLIAIENENLEIMELLLNHSVYVG), 98-124 (DALLYAIRKEVVGAVELLLSYRRPSGE), and 141-170 (PDITPIMLAAHTNNYEIIKLLVQKRVTIPR). Residues His172, Cys176, Cys178, and Cys181 each contribute to the Zn(2+) site. The discontinuously helical intramembrane region spans 326 to 360 (HWVVKLLTCMTIGFLFPMLSIAYLISPRSNLGLFI). At 361 to 363 (KKP) the chain is on the cytoplasmic side. The helical transmembrane segment at 364–384 (FIKFICHTASYLTFLFMLLLA) threads the bilayer. The Extracellular segment spans residues 385–404 (SQHIVRTDLHVQGPPPTVVE). A helical membrane pass occupies residues 405 to 419 (WMILPWVLGFIWGEI). Residues Glu418, Glu421, Asn436, and Asp439 each contribute to the Ca(2+) site. Residues 420–433 (KEMWDGGFTEYIHD) are Cytoplasmic-facing. The chain crosses the membrane as a helical span at residues 434 to 454 (WWNLMDFAMNSLYLATISLKI). Residues 455–476 (VAYVKYNGSRPREEWEMWHPTL) are Extracellular-facing. The N-linked (GlcNAc...) asparagine glycan is linked to Asn461. A helical transmembrane segment spans residues 477–497 (IAEALFAISNILSSLRLISLF). Residues 498 to 512 (TANSHLGPLQISLGR) are Cytoplasmic-facing. Residues 513 to 535 (MLLDILKFLFIYCLVLLAFANGL) traverse the membrane as a helical segment. At 536–603 (NQLYFYYETR…HEFTEFVGAT (68 aa)) the chain is on the extracellular side. Cys553 and Cys558 are joined by a disulfide. The helical transmembrane segment at 604 to 624 (MFGTYNVISLVVLLNMLIAMM) threads the bilayer. Over 625–973 (NNSYQLIADH…GQEEQVTTRL (349 aa)) the chain is Cytoplasmic. 2 disordered regions span residues 766 to 794 (HPRSFSTSSTELSQRDDNNDGSGGARAKS) and 810 to 837 (GPPLIRTMPRSSGAQGKSKAESSSKRSF). Residues 971-973 (TRL) are essential for binding to NHERF1 PDZ domain.

It belongs to the transient receptor (TC 1.A.4) family. STrpC subfamily. TRPC5 sub-subfamily. As to quaternary structure, homotetramer. Heterotetramer with TRPC1 and/or TRPC4. Each subunit in the homomeric ion channel (via ANK repeats) interacts with one copy of GTP-bound GNAI3; the interaction is direct and activates the ion channel. Interacts with TRPC4AP. Interacts with NHERF1. Interacts with MX1 and RNF24. Interacts (via C-terminus) with CABP1. Interacts with SESTD1 (via the spectrin 1 repeat). Interacts with PLSCR1. Interacts with PKD2L2. As to expression, expressed in brain with higher levels in fetal brain. Found in cerebellum and occipital pole.

Its subcellular location is the cell membrane. The catalysed reaction is Ca(2+)(in) = Ca(2+)(out). With respect to regulation, activated by G-protein coupled receptors via direct interaction with GTP-bound GNAI3, which increases the channel sensitivity to phosphatidylinositol bisphosphate. May be activated by intracellular calcium store depletion. Calcium channel activity is enhanced by MYLK, that promotes its subcellular localization at the plasma membrane. Functionally, forms a receptor-activated non-selective calcium permeant cation channel. Mediates calcium-dependent phosphatidylserine externalization and apoptosis in neurons via its association with PLSCR1. Acts on distinct neuronal populations in the hypothalamus to regulate innate behaviors including feeding, anxiety (flight/fight/fear), socialization, and maternal care. The protein is Short transient receptor potential channel 5 (TRPC5) of Homo sapiens (Human).